The following is a 304-amino-acid chain: Dihydroorotate dehydrogenase B (NAD(+)), catalytic subunit (304 aa).

Residues Ser22 and 46 to 47 (KG) each bind FMN. Residues Lys46 and 70–74 (NAIGL) contribute to the substrate site. Positions 100 and 128 each coordinate FMN. Position 128 (Asn128) interacts with substrate. The active-site Nucleophile is the Cys131. Residues Lys166 and Ile192 each contribute to the FMN site. 193–194 (NT) contributes to the substrate binding site. Residues Gly218, 244–245 (GG), and 266–267 (GT) contribute to the FMN site.

Belongs to the dihydroorotate dehydrogenase family. Type 1 subfamily. Heterotetramer of 2 PyrK and 2 PyrD type B subunits. It depends on FMN as a cofactor.

The protein resides in the cytoplasm. The catalysed reaction is (S)-dihydroorotate + NAD(+) = orotate + NADH + H(+). It participates in pyrimidine metabolism; UMP biosynthesis via de novo pathway; orotate from (S)-dihydroorotate (NAD(+) route): step 1/1. Its function is as follows. Catalyzes the conversion of dihydroorotate to orotate with NAD(+) as electron acceptor. The polypeptide is Dihydroorotate dehydrogenase B (NAD(+)), catalytic subunit (pyrD) (Pelobacter propionicus (strain DSM 2379 / NBRC 103807 / OttBd1)).